The following is a 239-amino-acid chain: UDP-2,3-diacylglucosamine hydrolase (239 aa).

5 residues coordinate Mn(2+): aspartate 8, histidine 10, aspartate 41, asparagine 79, and histidine 114. 79-80 (NR) provides a ligand contact to substrate. Positions 122, 160, 164, 167, and 195 each coordinate substrate. Mn(2+)-binding residues include histidine 195 and histidine 197.

It belongs to the LpxH family. Mn(2+) serves as cofactor.

It is found in the cell inner membrane. It catalyses the reaction UDP-2-N,3-O-bis[(3R)-3-hydroxytetradecanoyl]-alpha-D-glucosamine + H2O = 2-N,3-O-bis[(3R)-3-hydroxytetradecanoyl]-alpha-D-glucosaminyl 1-phosphate + UMP + 2 H(+). Its pathway is glycolipid biosynthesis; lipid IV(A) biosynthesis; lipid IV(A) from (3R)-3-hydroxytetradecanoyl-[acyl-carrier-protein] and UDP-N-acetyl-alpha-D-glucosamine: step 4/6. Its function is as follows. Hydrolyzes the pyrophosphate bond of UDP-2,3-diacylglucosamine to yield 2,3-diacylglucosamine 1-phosphate (lipid X) and UMP by catalyzing the attack of water at the alpha-P atom. Involved in the biosynthesis of lipid A, a phosphorylated glycolipid that anchors the lipopolysaccharide to the outer membrane of the cell. This is UDP-2,3-diacylglucosamine hydrolase from Sodalis glossinidius (strain morsitans).